The sequence spans 203 residues: Urease accessory protein UreG (203 aa).

10 to 17 contacts GTP; sequence GPVGAGKT.

It belongs to the SIMIBI class G3E GTPase family. UreG subfamily. Homodimer. UreD, UreF and UreG form a complex that acts as a GTP-hydrolysis-dependent molecular chaperone, activating the urease apoprotein by helping to assemble the nickel containing metallocenter of UreC. The UreE protein probably delivers the nickel.

The protein localises to the cytoplasm. Functionally, facilitates the functional incorporation of the urease nickel metallocenter. This process requires GTP hydrolysis, probably effectuated by UreG. This is Urease accessory protein UreG from Micrococcus luteus (strain ATCC 4698 / DSM 20030 / JCM 1464 / CCM 169 / CCUG 5858 / IAM 1056 / NBRC 3333 / NCIMB 9278 / NCTC 2665 / VKM Ac-2230) (Micrococcus lysodeikticus).